The primary structure comprises 930 residues: Isoleucine--tRNA ligase (930 aa).

The 'HIGH' region signature appears at 57 to 67; the sequence is PYANGNIHVGH. E554 serves as a coordination point for L-isoleucyl-5'-AMP. Positions 595–599 match the 'KMSKS' region motif; that stretch reads KMSKS. K598 is a binding site for ATP. Residues C888, C891, C908, and C911 each coordinate Zn(2+).

This sequence belongs to the class-I aminoacyl-tRNA synthetase family. IleS type 1 subfamily. In terms of assembly, monomer. Zn(2+) serves as cofactor.

It localises to the cytoplasm. It carries out the reaction tRNA(Ile) + L-isoleucine + ATP = L-isoleucyl-tRNA(Ile) + AMP + diphosphate. Catalyzes the attachment of isoleucine to tRNA(Ile). As IleRS can inadvertently accommodate and process structurally similar amino acids such as valine, to avoid such errors it has two additional distinct tRNA(Ile)-dependent editing activities. One activity is designated as 'pretransfer' editing and involves the hydrolysis of activated Val-AMP. The other activity is designated 'posttransfer' editing and involves deacylation of mischarged Val-tRNA(Ile). The polypeptide is Isoleucine--tRNA ligase (Streptococcus pneumoniae (strain Hungary19A-6)).